Reading from the N-terminus, the 123-residue chain is Unclassified hydrophobin 9 (123 aa).

The N-terminal stretch at 1–24 is a signal peptide; the sequence is MFFFNTKPIVFLVVLSVVATFAAA. Cystine bridges form between C37/C103, C45/C97, C46/C88, and C104/C117.

It belongs to the fungal hydrophobin family. Self-assembles to form functional amyloid fibrils called rodlets. Self-assembly into fibrillar rodlets occurs spontaneously at hydrophobic:hydrophilic interfaces and the rodlets further associate laterally to form amphipathic monolayers.

The protein resides in the secreted. It localises to the cell wall. In terms of biological role, aerial growth, conidiation, and dispersal of filamentous fungi in the environment rely upon a capability of their secreting small amphipathic proteins called hydrophobins (HPBs) with low sequence identity. Class I can self-assemble into an outermost layer of rodlet bundles on aerial cell surfaces, conferring cellular hydrophobicity that supports fungal growth, development and dispersal; whereas Class II form highly ordered films at water-air interfaces through intermolecular interactions but contribute nothing to the rodlet structure. In Pleurotus ostreatus (strain PC15) (Oyster mushroom), this protein is Unclassified hydrophobin 9.